Consider the following 95-residue polypeptide: Glycophorin-C (95 aa).

At 1 to 25 (MSSPVRTPPPERLEPNPGMSYAVME) the chain is on the extracellular side. The helical; Signal-anchor for type III membrane protein transmembrane segment at 26–46 (IAIIAAVITAVALVLVCLLFL) threads the bilayer. At 47–95 (MLRYLYRHKGTYYTNEAKGTEFAESADAALQSDPALQDAGDTSKKEYFI) the chain is on the cytoplasmic side. Serine 71, serine 78, and serine 89 each carry phosphoserine.

The protein belongs to the glycophorin-C family.

Its subcellular location is the cell membrane. This Rattus norvegicus (Rat) protein is Glycophorin-C (Gypc).